We begin with the raw amino-acid sequence, 95 residues long: Aspartyl/glutamyl-tRNA(Asn/Gln) amidotransferase subunit C (95 aa).

Belongs to the GatC family. In terms of assembly, heterotrimer of A, B and C subunits.

The catalysed reaction is L-glutamyl-tRNA(Gln) + L-glutamine + ATP + H2O = L-glutaminyl-tRNA(Gln) + L-glutamate + ADP + phosphate + H(+). It catalyses the reaction L-aspartyl-tRNA(Asn) + L-glutamine + ATP + H2O = L-asparaginyl-tRNA(Asn) + L-glutamate + ADP + phosphate + 2 H(+). Functionally, allows the formation of correctly charged Asn-tRNA(Asn) or Gln-tRNA(Gln) through the transamidation of misacylated Asp-tRNA(Asn) or Glu-tRNA(Gln) in organisms which lack either or both of asparaginyl-tRNA or glutaminyl-tRNA synthetases. The reaction takes place in the presence of glutamine and ATP through an activated phospho-Asp-tRNA(Asn) or phospho-Glu-tRNA(Gln). This Geotalea daltonii (strain DSM 22248 / JCM 15807 / FRC-32) (Geobacter daltonii) protein is Aspartyl/glutamyl-tRNA(Asn/Gln) amidotransferase subunit C.